The following is a 376-amino-acid chain: Queuine tRNA-ribosyltransferase accessory subunit 2 (376 aa).

Zn(2+) contacts are provided by Cys323, Cys325, Cys328, and His354.

The protein belongs to the queuine tRNA-ribosyltransferase family. QTRT2 subfamily. As to quaternary structure, heterodimer of a catalytic subunit and an accessory subunit. Zn(2+) serves as cofactor.

It localises to the cytoplasm. Its function is as follows. Non-catalytic subunit of the queuine tRNA-ribosyltransferase (TGT) that catalyzes the base-exchange of a guanine (G) residue with queuine (Q) at position 34 (anticodon wobble position) in tRNAs with GU(N) anticodons (tRNA-Asp, -Asn, -His and -Tyr), resulting in the hypermodified nucleoside queuosine (7-(((4,5-cis-dihydroxy-2-cyclopenten-1-yl)amino)methyl)-7-deazaguanosine). This chain is Queuine tRNA-ribosyltransferase accessory subunit 2, found in Caenorhabditis briggsae.